We begin with the raw amino-acid sequence, 591 residues long: Inactive metallocarboxypeptidase ECM14 (591 aa).

An N-terminal signal peptide occupies residues 1 to 21; that stretch reads MRLFARLEVLAILACAVPIAA. Residues 22–175 constitute a propeptide that is removed on maturation; sequence IPSFLSNSYP…QTIYESYPSS (154 aa). The region spanning 203-523 is the Peptidase M14 domain; the sequence is DYQPFSVIVT…NAVMVLGRFL (321 aa). 2 residues coordinate Zn(2+): His-265 and Glu-268. Residues 265 to 268, Arg-323, and 340 to 341 each bind substrate; these read HARE and DR. Cys-334 and Cys-357 form a disulfide bridge. 2 N-linked (GlcNAc...) asparagine glycosylation sites follow: Asn-350 and Asn-381. Zn(2+) is bound at residue His-397. 398–399 lines the substrate pocket; that stretch reads SY. Basic and acidic residues predominate over residues 533–543; sequence DWEDESQRPKA. A disordered region spans residues 533 to 591; the sequence is DWEDESQRPKADEDDIPSENELGENDDSWIPFDYRNHDDQNEGEGYDNDEWGFRRRRKG. 2 stretches are compositionally biased toward acidic residues: residues 544-559 and 573-582; these read DEDD…ENDD and NEGEGYDNDE.

This sequence belongs to the peptidase M14 family. It depends on Zn(2+) as a cofactor.

The protein resides in the vacuole. It is found in the secreted. Inactive carboxypeptidase that may play a role in cell wall organization and biogenesis. The sequence is that of Inactive metallocarboxypeptidase ECM14 (ECM14) from Paracoccidioides lutzii (strain ATCC MYA-826 / Pb01) (Paracoccidioides brasiliensis).